A 139-amino-acid polypeptide reads, in one-letter code: Protein shisa-5 (139 aa).

The helical transmembrane segment at 3-23 (FGTLVAIGVIVFAVVVITIIL) threads the bilayer.

Belongs to the shisa family.

It is found in the endoplasmic reticulum membrane. The protein localises to the nucleus membrane. Its function is as follows. Can induce apoptosis in a caspase-dependent manner and plays a role in p53/TP53-dependent apoptosis. This chain is Protein shisa-5 (Shisa5), found in Gallus gallus (Chicken).